Here is a 226-residue protein sequence, read N- to C-terminus: Ribonuclease 3 (226 aa).

Positions 6 to 128 constitute an RNase III domain; sequence FNKLQKKMGY…IIGGIFLDSN (123 aa). Residue Glu41 participates in Mg(2+) binding. Residue Asp45 is part of the active site. Mg(2+) is bound by residues Asn114 and Glu117. Glu117 is a catalytic residue. Residues 155-225 form the DRBM domain; the sequence is DPKTRLQEYL…AKQALLLFNI (71 aa).

This sequence belongs to the ribonuclease III family. Homodimer. Requires Mg(2+) as cofactor.

The protein resides in the cytoplasm. It carries out the reaction Endonucleolytic cleavage to 5'-phosphomonoester.. Its function is as follows. Digests double-stranded RNA. Involved in the processing of primary rRNA transcript to yield the immediate precursors to the large and small rRNAs (23S and 16S). Processes some mRNAs, and tRNAs when they are encoded in the rRNA operon. Processes pre-crRNA and tracrRNA of type II CRISPR loci if present in the organism. This Wigglesworthia glossinidia brevipalpis protein is Ribonuclease 3.